Here is a 315-residue protein sequence, read N- to C-terminus: Olfactory receptor 5P59 (315 aa).

Residues 1-28 are Extracellular-facing; the sequence is MAFLQDGNHTAVTEFILLGLTDDPVLRV. An N-linked (GlcNAc...) asparagine glycan is attached at Asn8. The helical transmembrane segment at 29–49 threads the bilayer; it reads VLFTIILCIYLVTVFGNLSTI. Residues 50–57 lie on the Cytoplasmic side of the membrane; that stretch reads LLIRVSSQ. The chain crosses the membrane as a helical span at residues 58–78; that stretch reads LHHPMYFFLSHLASVDIGISS. Over 79–102 the chain is Extracellular; sequence SVTPSMLVNFLLERSTISYLGCGI. Cys100 and Cys193 are joined by a disulfide. Residues 103–123 traverse the membrane as a helical segment; sequence QLGSADFIASVECFLLAAMAY. The Cytoplasmic portion of the chain corresponds to 124–136; the sequence is DRFMAVCNPLLYS. A helical membrane pass occupies residues 137-157; that stretch reads TKMSTQVCVQLVVGSYIGGFL. The Extracellular portion of the chain corresponds to 158–200; sequence NASLIVTVYFFSFLFCGPNRIDHFFCDFAPLAELSCSDVSVSV. The chain crosses the membrane as a helical span at residues 201-221; sequence LIISFSAGSVTMITVFVIVIS. Residues 222-241 are Cytoplasmic-facing; it reads YSYILITILKMHSTEGRHKA. A helical membrane pass occupies residues 242–262; that stretch reads FSTCTSHLTAVTLYYGTITFI. The Extracellular segment spans residues 263 to 275; it reads YVMPKSSFSTDQN. The chain crosses the membrane as a helical span at residues 276–296; the sequence is KVVSVFYMVMIPMLNPLIYSL. Topologically, residues 297–315 are cytoplasmic; the sequence is SNNEIKGALKRQLGMKTLS.

This sequence belongs to the G-protein coupled receptor 1 family.

The protein resides in the cell membrane. Functionally, potential odorant receptor. The protein is Olfactory receptor 5P59 of Mus musculus (Mouse).